A 293-amino-acid polypeptide reads, in one-letter code: Sec-independent protein translocase protein TatC (293 aa).

6 helical membrane-spanning segments follow: residues 35–55, 87–107, 123–143, 173–193, 204–224, and 228–248; these read AAIA…QPFI, LLKV…LYQA, LFGF…ISYF, ILKF…LVGI, ILKS…LTAP, and IMMM…AIGI.

Belongs to the TatC family. The Tat system comprises two distinct complexes: a TatABC complex, containing multiple copies of TatA, TatB and TatC subunits, and a separate TatA complex, containing only TatA subunits. Substrates initially bind to the TatABC complex, which probably triggers association of the separate TatA complex to form the active translocon.

The protein resides in the cell membrane. Its function is as follows. Part of the twin-arginine translocation (Tat) system that transports large folded proteins containing a characteristic twin-arginine motif in their signal peptide across membranes. Together with TatB, TatC is part of a receptor directly interacting with Tat signal peptides. The sequence is that of Sec-independent protein translocase protein TatC from Rothia mucilaginosa (strain DY-18) (Stomatococcus mucilaginosus).